Reading from the N-terminus, the 468-residue chain is Immunoglobulin superfamily member 21 (468 aa).

Residues Met1 to Gly24 form the signal peptide. Ig-like domains follow at residues Tyr25–Ala132 and Pro344–Ile429. Cysteines 46 and 116 form a disulfide.

In terms of assembly, interacts (Ig-like 1 domain) with NRXN2 (via Laminin G-like 1 domain) in a trans-interaction manner. In terms of tissue distribution, expressed in brain.

The protein resides in the postsynaptic cell membrane. In terms of biological role, involved in synaptic inhibition in the brain. Selectively regulates inhibitory presynaptic differentiation through interacting with presynaptic NRXN2. This Rattus norvegicus (Rat) protein is Immunoglobulin superfamily member 21.